The following is a 99-amino-acid chain: Fetal and adult testis-expressed transcript protein homolog (99 aa).

The helical transmembrane segment at 79–98 threads the bilayer; that stretch reads AALFTLLVSVCIANLWLWVH.

Interacts with BIK and RNF183. Interacts with IMMT/MIC60and EMD.

The protein localises to the mitochondrion. The protein resides in the mitochondrion outer membrane. Its subcellular location is the endoplasmic reticulum membrane. Involved in the regulation of endoplasmic reticulum (ER)-mitochondria coupling. Negatively regulates the ER-mitochondria distance and Ca(2+) transfer from ER to mitochondria possibly implicating it in the regulation of apoptosis. May collaborate with RNF183 to restrain BIK protein levels thus regulating apoptotic signaling. The protein is Fetal and adult testis-expressed transcript protein homolog (Fate1) of Mus musculus (Mouse).